The chain runs to 268 residues: Putative ABC transporter ATP-binding protein LMOf2365_1216 (268 aa).

The ABC transporter domain occupies L2–V237. G35–S42 contributes to the ATP binding site.

The protein belongs to the ABC transporter superfamily.

It is found in the cell membrane. Functionally, probably part of an ABC transporter complex. Responsible for energy coupling to the transport system. The chain is Putative ABC transporter ATP-binding protein LMOf2365_1216 from Listeria monocytogenes serotype 4b (strain F2365).